A 213-amino-acid polypeptide reads, in one-letter code: Oxidase ustYa (213 aa).

Positions 1–26 (MAERSSNGYKEVPVRQSEESTIAEEE) are disordered. Residues 48 to 68 (AVWFLIALLLLSNIGLLGGLI) form a helical membrane-spanning segment. A glycan (N-linked (GlcNAc...) asparagine) is linked at N98. 2 short sequence motifs (HXXHC) span residues 123 to 127 (HQLHC) and 150 to 154 (HLMHC).

It belongs to the ustYa family.

It localises to the membrane. Its pathway is mycotoxin biosynthesis. Functionally, oxidase; part of the gene cluster that mediates the biosynthesis of the secondary metabolite ustiloxin B, an antimitotic tetrapeptide. First, ustA is processed by the subtilisin-like endoprotease Kex2 that is outside the ustiloxin B gene cluster, at the C-terminal side of Arg-Lys, after transfer to Golgi apparatus through the endoplasmic reticulum (ER). Cleavage by KEX2 generates 16 peptides YAIG-I to YAIG-XVI. To process the precursor peptide further, at least two peptidases are necessary to cleave the N-terminal and C-terminal sides of the Tyr-Ala-Ile-Gly core peptide which serves as backbone for the synthesis of ustiloxin B, through cyclization and modification of the tyrosine with a non-protein coding amino acid, norvaline. One of the two peptidases must be the serine peptidase ustP; and the other pepdidase is probably ustH. Macrocyclization of the core peptide derived from ustA requires the tyrosinase ustQ, as well as the homologous oxidases ustYa and ustYb, and leads to the production of the first cyclization product N-desmethylustiloxin F. For the formation of N-desmethylustiloxin F, three oxidation steps are required, hydroxylation at the benzylic position, hydroxylation at either the aromatic ring of Tyr or beta-position of Ile, and oxidative cyclization. UstQ may catalyze the oxidation of a phenol moiety, whereas the ustYa and ustYb are most likely responsible for the remaining two-step oxidations. N-desmethylustiloxin F is then methylated by ustM to yield ustiloxin F which in turn substrate of the cytochrome P450 monooxygenase ustC which catalyzes the formation of S-deoxyustiloxin H. The flavoprotein monooxygenases ustF1 and ustF2 then participate in the modification of the side chain of S-deoxyustiloxin H, leading to the synthesis of an oxime intermediate, via ustiloxin H. Finally, carboxylative dehydration performed by the cysteine desulfurase-like protein ustD yields ustiloxin B. This Aspergillus flavus (strain ATCC 200026 / FGSC A1120 / IAM 13836 / NRRL 3357 / JCM 12722 / SRRC 167) protein is Oxidase ustYa.